We begin with the raw amino-acid sequence, 479 residues long: Aspartyl/glutamyl-tRNA(Asn/Gln) amidotransferase subunit B (479 aa).

Belongs to the GatB/GatE family. GatB subfamily. As to quaternary structure, heterotrimer of A, B and C subunits.

It carries out the reaction L-glutamyl-tRNA(Gln) + L-glutamine + ATP + H2O = L-glutaminyl-tRNA(Gln) + L-glutamate + ADP + phosphate + H(+). The enzyme catalyses L-aspartyl-tRNA(Asn) + L-glutamine + ATP + H2O = L-asparaginyl-tRNA(Asn) + L-glutamate + ADP + phosphate + 2 H(+). Functionally, allows the formation of correctly charged Asn-tRNA(Asn) or Gln-tRNA(Gln) through the transamidation of misacylated Asp-tRNA(Asn) or Glu-tRNA(Gln) in organisms which lack either or both of asparaginyl-tRNA or glutaminyl-tRNA synthetases. The reaction takes place in the presence of glutamine and ATP through an activated phospho-Asp-tRNA(Asn) or phospho-Glu-tRNA(Gln). The polypeptide is Aspartyl/glutamyl-tRNA(Asn/Gln) amidotransferase subunit B (Alcanivorax borkumensis (strain ATCC 700651 / DSM 11573 / NCIMB 13689 / SK2)).